Here is a 347-residue protein sequence, read N- to C-terminus: tRNA N6-adenosine threonylcarbamoyltransferase (347 aa).

Fe cation-binding residues include His-111 and His-115. Residues 134–138 (LVSGG), Asp-167, Gly-180, and Asn-276 contribute to the substrate site. Asp-304 is a Fe cation binding site.

The protein belongs to the KAE1 / TsaD family. It depends on Fe(2+) as a cofactor.

It localises to the cytoplasm. It catalyses the reaction L-threonylcarbamoyladenylate + adenosine(37) in tRNA = N(6)-L-threonylcarbamoyladenosine(37) in tRNA + AMP + H(+). Its function is as follows. Required for the formation of a threonylcarbamoyl group on adenosine at position 37 (t(6)A37) in tRNAs that read codons beginning with adenine. Is involved in the transfer of the threonylcarbamoyl moiety of threonylcarbamoyl-AMP (TC-AMP) to the N6 group of A37, together with TsaE and TsaB. TsaD likely plays a direct catalytic role in this reaction. The sequence is that of tRNA N6-adenosine threonylcarbamoyltransferase from Nitrosospira multiformis (strain ATCC 25196 / NCIMB 11849 / C 71).